A 154-amino-acid polypeptide reads, in one-letter code: N-acetylneuraminate anomerase NanQ (154 aa).

Belongs to the NanQ anomerase family. It depends on Zn(2+) as a cofactor.

It localises to the cytoplasm. The enzyme catalyses N-acetyl-alpha-neuraminate = aceneuramate. It carries out the reaction N-acetyl-beta-neuraminate = aceneuramate. Its activity is regulated as follows. Inhibited by 1,10-phenanthroline. Functionally, opens both the alpha- and beta-forms of N-acetylneuraminate (sialic acid; Neu5Ac) to provide aceneuramate, the preferred substrate for NanA. Has preferential activity on the beta-anomer rather than the alpha-anomer. Accelerates a reaction that is spontaneous at slightly alkaline pH, facilitates the reaction at acidic pH. The sequence is that of N-acetylneuraminate anomerase NanQ from Escherichia coli (strain K12).